Here is a 251-residue protein sequence, read N- to C-terminus: Chromobox protein homolog 7 (251 aa).

A Chromo domain is found at 11-69; the sequence is FAVESIRKKRVRKGKVEYLVKWKGWPPKYSTWEPEEHILDPRLVMAYEEKEERDRASGY. The interval 190–220 is disordered; that stretch reads EPAAQPPEEEADADLAEGPPPWTPALPSSEV. Residues 223 to 236 form a required for cellular lifespan extension region; that stretch reads TDITANSITVTFRE.

In terms of assembly, component of a PRC1-like complex. Interacts with RING1 and RNF2/RING1B, but not with BMI1, EED or EZH2. Interacts with PCGF1, PCGF2, PCGF3, PCGF5 and PCGF6.

The protein localises to the nucleus. Component of a Polycomb group (PcG) multiprotein PRC1-like complex, a complex class required to maintain the transcriptionally repressive state of many genes, including Hox genes, throughout development. PcG PRC1 complex acts via chromatin remodeling and modification of histones; it mediates monoubiquitination of histone H2A 'Lys-119', rendering chromatin heritably changed in its expressibility. Promotes histone H3 trimethylation at 'Lys-9' (H3K9me3). Binds to trimethylated lysine residues in histones, and possibly also other proteins. Regulator of cellular lifespan by maintaining the repression of CDKN2A, but not by inducing telomerase activity. This is Chromobox protein homolog 7 (CBX7) from Homo sapiens (Human).